Here is a 230-residue protein sequence, read N- to C-terminus: Large ribosomal subunit protein uL1 (230 aa).

Belongs to the universal ribosomal protein uL1 family. In terms of assembly, part of the 50S ribosomal subunit.

Binds directly to 23S rRNA. The L1 stalk is quite mobile in the ribosome, and is involved in E site tRNA release. Functionally, protein L1 is also a translational repressor protein, it controls the translation of the L11 operon by binding to its mRNA. The protein is Large ribosomal subunit protein uL1 of Metamycoplasma arthritidis (strain 158L3-1) (Mycoplasma arthritidis).